We begin with the raw amino-acid sequence, 325 residues long: Tagatose 1,6-diphosphate aldolase 1 (325 aa).

This sequence belongs to the aldolase LacD family.

The enzyme catalyses D-tagatofuranose 1,6-bisphosphate = D-glyceraldehyde 3-phosphate + dihydroxyacetone phosphate. Its pathway is carbohydrate metabolism; D-tagatose 6-phosphate degradation; D-glyceraldehyde 3-phosphate and glycerone phosphate from D-tagatose 6-phosphate: step 2/2. The sequence is that of Tagatose 1,6-diphosphate aldolase 1 (lacD1) from Enterococcus faecalis (strain ATCC 700802 / V583).